A 155-amino-acid chain; its full sequence is Protein-export protein SecB (155 aa).

It belongs to the SecB family. As to quaternary structure, homotetramer, a dimer of dimers. One homotetramer interacts with 1 SecA dimer.

The protein localises to the cytoplasm. One of the proteins required for the normal export of preproteins out of the cell cytoplasm. It is a molecular chaperone that binds to a subset of precursor proteins, maintaining them in a translocation-competent state. It also specifically binds to its receptor SecA. The chain is Protein-export protein SecB from Klebsiella pneumoniae subsp. pneumoniae (strain ATCC 700721 / MGH 78578).